A 155-amino-acid polypeptide reads, in one-letter code: UPF0178 protein Amet_2995 (155 aa).

It belongs to the UPF0178 family.

This Alkaliphilus metalliredigens (strain QYMF) protein is UPF0178 protein Amet_2995.